We begin with the raw amino-acid sequence, 141 residues long: Large ribosomal subunit protein uL11 (141 aa).

The protein belongs to the universal ribosomal protein uL11 family. In terms of assembly, part of the ribosomal stalk of the 50S ribosomal subunit. Interacts with L10 and the large rRNA to form the base of the stalk. L10 forms an elongated spine to which L12 dimers bind in a sequential fashion forming a multimeric L10(L12)X complex. Post-translationally, one or more lysine residues are methylated.

Functionally, forms part of the ribosomal stalk which helps the ribosome interact with GTP-bound translation factors. This chain is Large ribosomal subunit protein uL11, found in Geobacillus sp. (strain WCH70).